We begin with the raw amino-acid sequence, 156 residues long: MSRRHRAEKREINPDPKFGDLVITKFMNAIMFDGKKSVAERIVYGALDSVEKKVKADPVDLFHRALENVAPHIEVRSRRVGGATYQVPIDVRPDRRQALAIRWLISAACGRNETTMIERLSGELMDAANNRGSAVKKREDVHRMAEANRAFSHYRW.

It belongs to the universal ribosomal protein uS7 family. In terms of assembly, part of the 30S ribosomal subunit. Contacts proteins S9 and S11.

In terms of biological role, one of the primary rRNA binding proteins, it binds directly to 16S rRNA where it nucleates assembly of the head domain of the 30S subunit. Is located at the subunit interface close to the decoding center, probably blocks exit of the E-site tRNA. This is Small ribosomal subunit protein uS7 from Bartonella tribocorum (strain CIP 105476 / IBS 506).